We begin with the raw amino-acid sequence, 307 residues long: Mitogen-activated protein kinase kinase 7 (307 aa).

The Protein kinase domain maps to 45-303; the sequence is VEKLHVLGRG…ASQLLGHPFL (259 aa). Residues 51–59 and Lys74 each bind ATP; that span reads LGRGSSGIV. Catalysis depends on Asp165, which acts as the Proton acceptor. 2 positions are modified to phosphoserine: Ser193 and Ser199. Thr203 carries the phosphothreonine modification.

This sequence belongs to the protein kinase superfamily. STE Ser/Thr protein kinase family. MAP kinase kinase subfamily. In terms of assembly, interacts with MPK15. Post-translationally, phosphorylation at Ser-193 and Ser-199 by MAP kinase kinase kinases positively regulates kinase activity. As to expression, expressed in all tissues, with a relatively higher level in leaves and lower level in roots and flowers.

It catalyses the reaction L-seryl-[protein] + ATP = O-phospho-L-seryl-[protein] + ADP + H(+). The enzyme catalyses L-threonyl-[protein] + ATP = O-phospho-L-threonyl-[protein] + ADP + H(+). It carries out the reaction L-tyrosyl-[protein] + ATP = O-phospho-L-tyrosyl-[protein] + ADP + H(+). Its function is as follows. May function as a negative regulator of polar auxin transport. Positively regulates plant basal and systemic acquired resistance (SAR). Activates MPK3 and MPK6 in vitro. This Arabidopsis thaliana (Mouse-ear cress) protein is Mitogen-activated protein kinase kinase 7 (MKK7).